The chain runs to 5911 residues: Nonribosomal peptide synthetase 30 (5911 aa).

The tract at residues Met-1–Asp-22 is disordered. Positions Ala-352 to Arg-754 are adenylation 1. The 78-residue stretch at Pro-891–Thr-968 folds into the Carrier 1 domain. Ser-928 carries the O-(pantetheine 4'-phosphoryl)serine modification. Positions Glu-1007–Leu-1422 are condensation 1. The adenylation 2 stretch occupies residues Glu-1467–Asp-1865. One can recognise a Carrier 2 domain in the interval Gln-2001–Ser-2077. The residue at position 2038 (Ser-2038) is an O-(pantetheine 4'-phosphoryl)serine. The tract at residues Gln-2121–Gly-2538 is condensation 2. The segment at Glu-2568–Arg-2977 is adenylation 3. The 77-residue stretch at Gln-3110–Lys-3186 folds into the Carrier 3 domain. The residue at position 3147 (Ser-3147) is an O-(pantetheine 4'-phosphoryl)serine. A condensation 3 region spans residues Val-3227–Ala-3652. Residues Glu-3701–Arg-4108 are adenylation 4. The Carrier 4 domain occupies Pro-4248–Lys-4325. O-(pantetheine 4'-phosphoryl)serine is present on Ser-4285. The segment at Ala-4326–Ala-4347 is disordered. Positions Ser-4353 to Arg-4793 are condensation 4. The segment at Phe-4819 to Arg-5231 is adenylation 5. Residues Lys-5360 to Val-5436 enclose the Carrier 5 domain. Ser-5397 carries the O-(pantetheine 4'-phosphoryl)serine modification. Positions Val-5474–Thr-5828 are condensation 5.

It belongs to the NRP synthetase family.

It participates in secondary metabolite biosynthesis. Nonribosomal peptide synthetase; part of the gene cluster that mediates the biosynthesis of sansalvamide, a cyclic pentadepsipeptide that shows promising results as potential anti-cancer drug. The nonribosmal peptide synthetase NRPS30 produces sansalvamide by incorporating successively one phenylalanine, one leucine, one alpha-hydroxyisocaproic acid (HICA), one valine and one leucine before sansalvamide is released from by cyclization by the terminal C domain of NRPS30. The HICA residue is probably provided by reduction of alpha-ketoisocaproate by the cluster-specific aldo-keto reductase (NECHADRAFT_45914). The polypeptide is Nonribosomal peptide synthetase 30 (Fusarium vanettenii (strain ATCC MYA-4622 / CBS 123669 / FGSC 9596 / NRRL 45880 / 77-13-4) (Fusarium solani subsp. pisi)).